The following is a 391-amino-acid chain: Solute carrier family 35 member F2 (391 aa).

10 helical membrane passes run 39–59, 73–93, 108–128, 137–157, 165–185, 200–220, 230–250, 267–287, 294–314, and 318–338; these read MLLS…IRLT, LFQS…TLAV, WWKY…VVKA, IQLL…FFLL, FIGA…DVLM, LIGD…SVCQ, VELL…QLAI, LLYV…PVVI, AINL…LFLF, and FSGL…FYFS. Residues 361–391 are disordered; it reads VELPSSGQLEPSVTYTSLSQETEEEPRVRVA. Positions 365 to 380 are enriched in polar residues; it reads SSGQLEPSVTYTSLSQ.

It belongs to the SLC35F solute transporter family.

The protein resides in the membrane. In terms of biological role, putative solute transporter. The protein is Solute carrier family 35 member F2 (slc35f2) of Xenopus tropicalis (Western clawed frog).